The primary structure comprises 171 residues: Small ribosomal subunit protein uS13 (171 aa).

A compositionally biased stretch (polar residues) spans 1–11; the sequence is MAKGSANNVKV. 2 disordered regions span residues 1-24 and 144-164; these read MAKGSANNVKVNQDAGKSQPEKKE and EKGKKVRGQRTRSNGRKGLSI. The segment covering 144-158 has biased composition (basic residues); that stretch reads EKGKKVRGQRTRSNG.

Belongs to the universal ribosomal protein uS13 family. Part of the 30S ribosomal subunit. Forms a loose heterodimer with protein S19. Forms two bridges to the 50S subunit in the 70S ribosome.

Functionally, located at the top of the head of the 30S subunit, it contacts several helices of the 16S rRNA. In the 70S ribosome it contacts the 23S rRNA (bridge B1a) and protein L5 of the 50S subunit (bridge B1b), connecting the 2 subunits; these bridges are implicated in subunit movement. The chain is Small ribosomal subunit protein uS13 from Thermoplasma acidophilum (strain ATCC 25905 / DSM 1728 / JCM 9062 / NBRC 15155 / AMRC-C165).